The chain runs to 148 residues: uncharacterized protein (148 aa).

The span at 1 to 11 (MKPRNINNSLP) shows a compositional bias: polar residues. The disordered stretch occupies residues 1 to 31 (MKPRNINNSLPLQPLVPDQENKNKKNEEKSV). Over residues 19 to 30 (QENKNKKNEEKS) the composition is skewed to basic and acidic residues.

This is an uncharacterized protein from Escherichia coli (strain K12).